A 155-amino-acid chain; its full sequence is 6,7-dimethyl-8-ribityllumazine synthase (155 aa).

5-amino-6-(D-ribitylamino)uracil-binding positions include Phe-23, Ala-57–Glu-59, and Ala-81–Ile-83. A (2S)-2-hydroxy-3-oxobutyl phosphate-binding site is contributed by Ala-86 to Thr-87. The active-site Proton donor is His-89. Phe-114 serves as a coordination point for 5-amino-6-(D-ribitylamino)uracil. Arg-128 contacts (2S)-2-hydroxy-3-oxobutyl phosphate.

Belongs to the DMRL synthase family.

It carries out the reaction (2S)-2-hydroxy-3-oxobutyl phosphate + 5-amino-6-(D-ribitylamino)uracil = 6,7-dimethyl-8-(1-D-ribityl)lumazine + phosphate + 2 H2O + H(+). The protein operates within cofactor biosynthesis; riboflavin biosynthesis; riboflavin from 2-hydroxy-3-oxobutyl phosphate and 5-amino-6-(D-ribitylamino)uracil: step 1/2. In terms of biological role, catalyzes the formation of 6,7-dimethyl-8-ribityllumazine by condensation of 5-amino-6-(D-ribitylamino)uracil with 3,4-dihydroxy-2-butanone 4-phosphate. This is the penultimate step in the biosynthesis of riboflavin. The protein is 6,7-dimethyl-8-ribityllumazine synthase of Pelotomaculum thermopropionicum (strain DSM 13744 / JCM 10971 / SI).